The primary structure comprises 378 residues: P2X receptor A (378 aa).

At Met-1–Gly-27 the chain is on the cytoplasmic side. The chain crosses the membrane as a helical span at residues Ile-28 to Ile-48. Over Lys-49 to His-307 the chain is Lumenal. A pore-forming motif region spans residues Arg-290–Ile-303. Residues Phe-308–Val-328 traverse the membrane as a helical segment. Over Val-329–Leu-378 the chain is Cytoplasmic.

It belongs to the P2X receptor family.

Its subcellular location is the contractile vacuole membrane. In terms of biological role, P2X receptors are ATP-gated ion channels that play a role in intracellular calcium signaling. Not required for the purinergic response to extracellular nucleotides. Inward currents evoked by intracellular ATP and ATP analogs. Exclusively selective for ATP over other nucleotides. Insensitive to P2 receptor antagonists PPADS, suramin and 2',3'-O-(2,4,6-trinitrophenyl)-ATP but inhibited by nanomolar concentrations of copper and sodium ion. More permeable to ammonium than either sodium or potassium ions and less permeable to choline. It has been reported that p2xA is not essential for osmoregulation, however this information is in contradiction with another source which indicates that p2xA is required for osmoregulation. Found to be permeable to chloride ions. Inhibited by copper and sodium ions. The sequence is that of P2X receptor A (p2xA) from Dictyostelium discoideum (Social amoeba).